The primary structure comprises 123 residues: uncharacterized protein (123 aa).

In terms of domain architecture, Rhodanese spans 17–117 (LNNNAFLVDV…NNQDKGWKQN (101 aa)).

This is an uncharacterized protein from Rickettsia prowazekii (strain Madrid E).